The chain runs to 920 residues: 3-hydroxy-3-methylglutaryl-coenzyme A reductase (920 aa).

Residues F12–L32 form a helical membrane-spanning segment. The N-linked (GlcNAc...) asparagine glycan is linked to N37. Positions G62 to H85 are disordered. Residues I71 to S82 show a composition bias toward polar residues. An SSD domain is found at D106 to L263. The next 5 helical transmembrane spans lie at V107–H129, V136–I156, L170–L190, L208–T228, and V237–Y257. 2 N-linked (GlcNAc...) asparagine glycosylation sites follow: N342 and N346. Residues S364–F384 form a helical membrane-spanning segment. A linker region spans residues D385–G498. N-linked (GlcNAc...) asparagine glycosylation is found at N443 and N475. A catalytic region spans residues G499–G829. Residues E586, K717, and D793 each act as charge relay system in the active site. N-linked (GlcNAc...) asparagine glycosylation is found at N797 and N802. Catalysis depends on H892, which acts as the Proton donor. N896 and N910 each carry an N-linked (GlcNAc...) asparagine glycan.

This sequence belongs to the HMG-CoA reductase family. Highly expressed in embryonic gonadal mesoderm, where expression is initially broad, and then becomes restricted to a segmental pattern at stage 11. Expression is then further restricted to a cluster of cells in each of parasegments 10, 11 and 12, corresponding to the developing gonadal mesoderm. Not expressed in pole cells.

It localises to the endoplasmic reticulum membrane. The enzyme catalyses (R)-mevalonate + 2 NADP(+) + CoA = (3S)-3-hydroxy-3-methylglutaryl-CoA + 2 NADPH + 2 H(+). It participates in metabolic intermediate biosynthesis; (R)-mevalonate biosynthesis; (R)-mevalonate from acetyl-CoA: step 3/3. The activity of HMG-CoA-reductase is suppressed by exogenous mevalonate. Functionally, synthesis of mevalonate for the production of non-sterol isoprenoids, which are essential for growth differentiation. Provides spatial information during embryogenesis to guide migrating primordial germ cells (the pole cells) from the ectoderm to the mesoderm. Also required for association of the pole cells with the gonadal mesoderm. This chain is 3-hydroxy-3-methylglutaryl-coenzyme A reductase (Hmgcr), found in Drosophila melanogaster (Fruit fly).